The primary structure comprises 394 residues: Elongation factor Tu (394 aa).

The region spanning 10 to 204 is the tr-type G domain; it reads KPHVNVGTIG…ALDSYIPTPE (195 aa). Residues 19-26 form a G1 region; sequence GHVDHGKT. GTP is bound at residue 19-26; sequence GHVDHGKT. Thr-26 is a binding site for Mg(2+). Positions 60-64 are G2; it reads GITIN. The G3 stretch occupies residues 81–84; it reads DCPG. GTP-binding positions include 81–85 and 136–139; these read DCPGH and NKCD. The tract at residues 136-139 is G4; that stretch reads NKCD. Residues 174–176 are G5; it reads SAL.

Belongs to the TRAFAC class translation factor GTPase superfamily. Classic translation factor GTPase family. EF-Tu/EF-1A subfamily. In terms of assembly, monomer.

The protein localises to the cytoplasm. The enzyme catalyses GTP + H2O = GDP + phosphate + H(+). Its function is as follows. GTP hydrolase that promotes the GTP-dependent binding of aminoacyl-tRNA to the A-site of ribosomes during protein biosynthesis. The chain is Elongation factor Tu from Neisseria meningitidis serogroup A / serotype 4A (strain DSM 15465 / Z2491).